Consider the following 622-residue polypeptide: Palmitoyl-protein thioesterase-dolichyl pyrophosphate phosphatase fusion 1 (622 aa).

An N-terminal signal peptide occupies residues 1 to 24 (MLSCSSFLIFFLFSWVLLPMKSFA). Residues 25 to 405 (IPIISLDKVR…NVSEEKGPKS (381 aa)) lie on the Lumenal side of the membrane. An intrachain disulfide couples C106 to C138. The active site involves S125. The N-linked (GlcNAc...) asparagine glycan is linked to N223. D245 is a catalytic residue. N-linked (GlcNAc...) asparagine glycosylation is present at N260. H298 is an active-site residue. N396 carries N-linked (GlcNAc...) asparagine glycosylation. Residues 406–426 (FANLAFITIFSHFFYHIDDMW) form a helical membrane-spanning segment. The Cytoplasmic portion of the chain corresponds to 427–428 (RS). The helical transmembrane segment at 429 to 449 (TLGLFSLIPQIIGIIYLTVMF) threads the bilayer. Topologically, residues 450-488 (TGRELDTFMQFGGQVVNEFINYVVKVSLKYPRPADIEYG) are lumenal. The helical transmembrane segment at 489-511 (VGYGMPSSHSQFMGFFSAYMIAW) threads the bilayer. Topologically, residues 512–519 (DYKYRRSQ) are cytoplasmic. The chain crosses the membrane as a helical span at residues 520–540 (CFSMLSFAKYAIYLTLSTFVC). Over 541–552 (SSRYLLDFHYLT) the chain is Lumenal. A helical transmembrane segment spans residues 553–573 (QVVYGYMIGFGVGLFWVYLVG). Residues 574–622 (KLRSLGVTKWLLSLPPLQFFYIKDTIPHSKDNHKRQWLESKQFKNQKSN) are Cytoplasmic-facing.

This sequence in the N-terminal section; belongs to the palmitoyl-protein thioesterase family. It in the C-terminal section; belongs to the dolichyldiphosphatase family. Proteolytically cleaved, possibly by krp1.

It localises to the vacuole. The protein resides in the endoplasmic reticulum membrane. The enzyme catalyses S-hexadecanoyl-L-cysteinyl-[protein] + H2O = L-cysteinyl-[protein] + hexadecanoate + H(+). The catalysed reaction is a di-trans,poly-cis-dolichyl diphosphate + H2O = a di-trans,poly-cis-dolichyl phosphate + phosphate + H(+). In terms of biological role, essential protein. Removes thioester-linked fatty acyl groups such as palmitate from modified cysteine residues in proteins or peptides during vacuolar degradation. Required for efficient N-glycosylation. Necessary for maintaining optimal levels of dolichol-linked oligosaccharides. The sequence is that of Palmitoyl-protein thioesterase-dolichyl pyrophosphate phosphatase fusion 1 (pdf1) from Schizosaccharomyces pombe (strain 972 / ATCC 24843) (Fission yeast).